Consider the following 400-residue polypeptide: Homoserine O-acetyltransferase (400 aa).

Residues 1–22 form a disordered region; that stretch reads MMNVHPVKGPVATGGERPHEAD. The AB hydrolase-1 domain maps to 64-374; sequence NAILVCHALT…DKGHDAFLLD (311 aa). Residue serine 169 is the Nucleophile of the active site. Arginine 239 is a binding site for substrate. Active-site residues include aspartate 335 and histidine 368. Substrate is bound at residue aspartate 369.

It belongs to the AB hydrolase superfamily. MetX family. As to quaternary structure, homodimer.

It is found in the cytoplasm. It carries out the reaction L-homoserine + acetyl-CoA = O-acetyl-L-homoserine + CoA. It functions in the pathway amino-acid biosynthesis; L-methionine biosynthesis via de novo pathway; O-acetyl-L-homoserine from L-homoserine: step 1/1. Functionally, transfers an acetyl group from acetyl-CoA to L-homoserine, forming acetyl-L-homoserine. This chain is Homoserine O-acetyltransferase, found in Rhodopseudomonas palustris (strain HaA2).